A 682-amino-acid chain; its full sequence is DNA-directed RNA polymerase subunit beta' (682 aa).

The Zn(2+) site is built by Cys69, Cys71, Cys87, and Cys90. Positions 489, 491, and 493 each coordinate Mg(2+).

The protein belongs to the RNA polymerase beta' chain family. RpoC1 subfamily. In terms of assembly, in plastids the minimal PEP RNA polymerase catalytic core is composed of four subunits: alpha, beta, beta', and beta''. When a (nuclear-encoded) sigma factor is associated with the core the holoenzyme is formed, which can initiate transcription. Mg(2+) serves as cofactor. The cofactor is Zn(2+).

The protein localises to the plastid. Its subcellular location is the chloroplast. The catalysed reaction is RNA(n) + a ribonucleoside 5'-triphosphate = RNA(n+1) + diphosphate. DNA-dependent RNA polymerase catalyzes the transcription of DNA into RNA using the four ribonucleoside triphosphates as substrates. The chain is DNA-directed RNA polymerase subunit beta' from Oryza nivara (Indian wild rice).